The primary structure comprises 203 residues: dITP/XTP pyrophosphatase (203 aa).

8–13 (TANKGK) is a substrate binding site. Mg(2+)-binding residues include Glu-41 and Asp-70. Asp-70 acts as the Proton acceptor in catalysis. Residues Ser-71, 153–156 (FGYD), Lys-176, and 181–182 (HR) contribute to the substrate site.

The protein belongs to the HAM1 NTPase family. As to quaternary structure, homodimer. The cofactor is Mg(2+).

The catalysed reaction is XTP + H2O = XMP + diphosphate + H(+). The enzyme catalyses dITP + H2O = dIMP + diphosphate + H(+). It carries out the reaction ITP + H2O = IMP + diphosphate + H(+). Its function is as follows. Pyrophosphatase that catalyzes the hydrolysis of nucleoside triphosphates to their monophosphate derivatives, with a high preference for the non-canonical purine nucleotides XTP (xanthosine triphosphate), dITP (deoxyinosine triphosphate) and ITP. Seems to function as a house-cleaning enzyme that removes non-canonical purine nucleotides from the nucleotide pool, thus preventing their incorporation into DNA/RNA and avoiding chromosomal lesions. This is dITP/XTP pyrophosphatase from Listeria monocytogenes serotype 4b (strain F2365).